A 191-amino-acid polypeptide reads, in one-letter code: D-glycero-beta-D-manno-heptose-1,7-bisphosphate 7-phosphatase (191 aa).

Aspartate 11 (nucleophile) is an active-site residue. The Mg(2+) site is built by aspartate 11 and aspartate 13. Residues aspartate 11–aspartate 13, aspartate 19–tyrosine 22, and threonine 53–serine 56 contribute to the substrate site. The Proton donor role is filled by aspartate 13. The Zn(2+) site is built by cysteine 92, histidine 94, cysteine 107, and cysteine 109. Position 110–111 (arginine 110–lysine 111) interacts with substrate. Residues aspartate 136 and lysine 137 each coordinate Mg(2+). Lysine 137 is a substrate binding site.

Belongs to the GmhB family. As to quaternary structure, monomer. Mg(2+) is required as a cofactor. Zn(2+) serves as cofactor.

It is found in the cytoplasm. The enzyme catalyses D-glycero-beta-D-manno-heptose 1,7-bisphosphate + H2O = D-glycero-beta-D-manno-heptose 1-phosphate + phosphate. Its pathway is nucleotide-sugar biosynthesis; ADP-L-glycero-beta-D-manno-heptose biosynthesis; ADP-L-glycero-beta-D-manno-heptose from D-glycero-beta-D-manno-heptose 7-phosphate: step 2/4. It participates in bacterial outer membrane biogenesis; LPS core biosynthesis. Functionally, converts the D-glycero-beta-D-manno-heptose 1,7-bisphosphate intermediate into D-glycero-beta-D-manno-heptose 1-phosphate by removing the phosphate group at the C-7 position. This is D-glycero-beta-D-manno-heptose-1,7-bisphosphate 7-phosphatase (gmhB) from Escherichia coli O157:H7.